A 451-amino-acid polypeptide reads, in one-letter code: UDP-glycosyltransferase 76C4 (451 aa).

UDP-alpha-D-glucose contacts are provided by residues Ser-273, 332 to 334 (APQ), 349 to 357 (HNGWNSTVE), and 371 to 374 (RWDQ).

The protein belongs to the UDP-glycosyltransferase family.

In Arabidopsis thaliana (Mouse-ear cress), this protein is UDP-glycosyltransferase 76C4 (UGT76C4).